The chain runs to 154 residues: 6,7-dimethyl-8-ribityllumazine synthase (154 aa).

5-amino-6-(D-ribitylamino)uracil contacts are provided by residues phenylalanine 22, 56-58 (AFE), and 80-82 (AVI). Residue 85 to 86 (AT) coordinates (2S)-2-hydroxy-3-oxobutyl phosphate. Catalysis depends on histidine 88, which acts as the Proton donor. Residue phenylalanine 113 coordinates 5-amino-6-(D-ribitylamino)uracil. Arginine 127 is a (2S)-2-hydroxy-3-oxobutyl phosphate binding site.

It belongs to the DMRL synthase family.

It catalyses the reaction (2S)-2-hydroxy-3-oxobutyl phosphate + 5-amino-6-(D-ribitylamino)uracil = 6,7-dimethyl-8-(1-D-ribityl)lumazine + phosphate + 2 H2O + H(+). It participates in cofactor biosynthesis; riboflavin biosynthesis; riboflavin from 2-hydroxy-3-oxobutyl phosphate and 5-amino-6-(D-ribitylamino)uracil: step 1/2. Catalyzes the formation of 6,7-dimethyl-8-ribityllumazine by condensation of 5-amino-6-(D-ribitylamino)uracil with 3,4-dihydroxy-2-butanone 4-phosphate. This is the penultimate step in the biosynthesis of riboflavin. This is 6,7-dimethyl-8-ribityllumazine synthase from Clostridium botulinum (strain ATCC 19397 / Type A).